Reading from the N-terminus, the 435-residue chain is Putrescine transporter PotE (435 aa).

The next 12 membrane-spanning stretches (helical) occupy residues 8–28 (IGVV…GIIM), 39–59 (ISIV…YAFA), 95–115 (LVIA…ELFG), 117–137 (ILSP…ATVL), 148–168 (ISSF…IIGW), 185–205 (VPTF…FLGL), 224–244 (IAVL…TNVI), 275–295 (VIMG…QFTI), 320–340 (APVV…LMTI), 354–374 (LAVV…AVLL), 386–406 (TTVF…YAAG), and 409–429 (AMLY…FVSY).

The protein belongs to the amino acid-polyamine-organocation (APC) superfamily. Basic amino acid/polyamine antiporter (APA) (TC 2.A.3.2) family.

The protein localises to the cell inner membrane. The catalysed reaction is putrescine(in) + H(+)(in) = putrescine(out) + H(+)(out). The enzyme catalyses putrescine(in) + L-ornithine(out) = putrescine(out) + L-ornithine(in). In terms of biological role, catalyzes both the uptake and excretion of putrescine. The uptake of putrescine is dependent on the membrane potential and the excretion involves putrescine-ornithine antiporter activity. This is Putrescine transporter PotE from Haemophilus influenzae (strain ATCC 51907 / DSM 11121 / KW20 / Rd).